We begin with the raw amino-acid sequence, 347 residues long: NADH-quinone oxidoreductase subunit H (347 aa).

Helical transmembrane passes span 13–33, 82–102, 115–135, 161–181, 198–218, 248–268, 286–306, and 325–345; these read LIIA…VAYL, GVFL…WAVI, VGIL…IMGG, IGFV…TDIV, FLDW…ISAL, FLLF…LMTV, VPGI…FAMV, and VFLP…KVFG.

This sequence belongs to the complex I subunit 1 family. NDH-1 is composed of 14 different subunits. Subunits NuoA, H, J, K, L, M, N constitute the membrane sector of the complex.

It is found in the cell inner membrane. The catalysed reaction is a quinone + NADH + 5 H(+)(in) = a quinol + NAD(+) + 4 H(+)(out). Its function is as follows. NDH-1 shuttles electrons from NADH, via FMN and iron-sulfur (Fe-S) centers, to quinones in the respiratory chain. The immediate electron acceptor for the enzyme in this species is believed to be ubiquinone. Couples the redox reaction to proton translocation (for every two electrons transferred, four hydrogen ions are translocated across the cytoplasmic membrane), and thus conserves the redox energy in a proton gradient. This subunit may bind ubiquinone. The sequence is that of NADH-quinone oxidoreductase subunit H from Brucella melitensis biotype 1 (strain ATCC 23456 / CCUG 17765 / NCTC 10094 / 16M).